A 196-amino-acid chain; its full sequence is Calcium channel flower (196 aa).

A run of 3 helical transmembrane segments spans residues 36–56 (LGIV…LSII), 67–89 (IIQM…ICIE), and 114–134 (AVPP…GLIF).

Belongs to the calcium channel flower family. As to quaternary structure, homomultimer. Associates with the dally/ magu complex.

The protein resides in the cell membrane. Its subcellular location is the cytoplasmic vesicle. It is found in the secretory vesicle. It localises to the synaptic vesicle membrane. The protein localises to the presynaptic cell membrane. The protein resides in the endosome. Its activity is regulated as follows. Channel activity is inhibited by La(3+), which reduces Ca(2+) influx and thus inhibits it's function in promoting activity-dependent bulk endocytosis (ADBE) in response to high stimuli. Its function is as follows. Transmembrane protein which mediates synaptic endocytosis, fitness-based cell culling, neuronal culling, morphogen gradient scaling, and calcium transport. Regulates synaptic endocytosis and hence couples exo- with endocytosis. Controls two major modes of synaptic vesicle (SV) endocytosis in the synaptic boutons of neuromuscular junctions (NMJs); Ca(2+) channel-independent Clathrin-mediated endocytosis (CME) in response to mild stimulation, and Ca(2+) channel-dependent activity-dependent bulk endocytosis (ADBE) in response to strong stimulation. Functions in ADBE and subsequent SV reformation from bulk endosomes by initiating Ca(2+) channel-dependent phosphatidylinositol 4,5-bisphosphate (PtdIns(4,5)P2) compartmentalization in synaptic boutons. There it acts at the periactive zone to provide the low Ca(2+) levels required to initiate Calcineurin activation and upregulate PtdIns(4,5)P2. Conversely PtdIns(4,5)P2 enhances fwe Ca(2+) channel-activity, establishing a positive feedback loop that induces PtdIns(4,5)P2 microdomain at the periactive zone. These microdomains trigger bulk membrane invagination (i.e. ADBE) by triggering actin polymerization while also promoting localization of fwe to bulk endosomes, thereby removing the ADBE trigger to reduce endocytosis and prevent excess membrane uptake. PtdIns(4,5)P2 then promotes SV reformation from the bulk endosomes, to coordinate ADBE and subsequent SV reformation. Different combinations of the flower isoforms at the cell membrane are also required for the identification and elimination of suboptimal or supernumerary cells during development, regeneration, and adulthood. Required for the recognition and elimination of unfit cells in the developing wing during cell competition. In the developing pupal retina, mediates the elimination of unwanted postmitotic neurons, including supernumerary photoreceptor neurons that form at the periphery of the retina and are contained within incomplete ommatidia units. Also required for efficient elimination and replacement of old neurons by newly generated neurons during regeneration in the adult brain following mechanical injury. Downstream of the flower fitness fingerprints, cells identified as unwanted or unfit are eliminated via apoptosis through the expression of ahuizotl (azot). However, the cells marked for elimination by the flower isoforms only undergo apoptosis if additional thresholds are met; (1) their neighboring fit/healthy cells express different levels of the fwe isoforms, and (2) the levels of the protective signal SPARC expressed by the loser or unwanted cells are unable to inhibit caspase activation. These additional thresholds for flower-mediated apoptosis, allows useful cells to recover from transient and limited stress before they are unnecessarily eliminated. Functions with dally and magu in a mechanism of scaling, which utilises apoptosis to ensure that the dpp morphogen gradient, which mediates organ growth, remains proportional to the size of the growing wing. In this mechanism, fwe represses dally- and Magu-dependent activity in expanding the gradient, and dally/Magu inhibits fwe-dependent apoptosis to keep cell death rate low. When the levels of these different proteins are optimally regulated the gradient correctly scales with organ growth but when this fails, fwe-mediated apoptosis is activated to trim the developing tissue to match the correct size of the gradient. The polypeptide is Calcium channel flower (Drosophila virilis (Fruit fly)).